Here is a 106-residue protein sequence, read N- to C-terminus: Small ribosomal subunit protein uS10 (106 aa).

The protein belongs to the universal ribosomal protein uS10 family. In terms of assembly, part of the 30S ribosomal subunit.

Its function is as follows. Involved in the binding of tRNA to the ribosomes. This is Small ribosomal subunit protein uS10 from Prochlorococcus marinus (strain MIT 9303).